The sequence spans 45 residues: U1-ctenitoxin-Pk1a (45 aa).

4 disulfides stabilise this stretch: Cys3–Cys16, Cys10–Cys25, Cys15–Cys34, and Cys27–Cys32.

In terms of tissue distribution, expressed by the venom gland.

It localises to the secreted. Neurotoxin. Causes rapid general flaccid paralysis and death in mice at dose levels of 5 ug per mouse. The chain is U1-ctenitoxin-Pk1a from Phoneutria keyserlingi (Brazilian wandering spider).